The chain runs to 678 residues: Platelet endothelial cell adhesion molecule (678 aa).

The signal sequence occupies residues M1 to A17. At Q18–K589 the chain is on the extracellular side. 6 consecutive Ig-like C2-type domains span residues G40–T126, G135–S213, P225–N309, P315–V391, G413–S472, and P488–P577. Residues C47 and C99 are joined by a disulfide bond. N74 and N141 each carry an N-linked (GlcNAc...) asparagine glycan. Intrachain disulfides connect C142–C195 and C245–C293. N309, N345, N360, N424, and N540 each carry an N-linked (GlcNAc...) asparagine glycan. Disulfide bonds link C336–C375, C420–C465, and C512–C561. The chain crosses the membrane as a helical span at residues G590 to Y610. Over Y611–P678 the chain is Cytoplasmic. The segment at N634–S653 is disordered. Positions V658 to V663 match the ITIM motif motif. Y660 carries the phosphotyrosine; by FER modification.

As to quaternary structure, trans-homodimer (via Ig-like C2-type 1 and Ig-like C2-type 2 domains); trans-homodimerization is required for cell-cell interaction. Forms a complex with BDKRB2 and GNAQ. Interacts with BDKRB2 and GNAQ. Interacts with PTPN11. Interacts with FER. Interacts with CD177; the interaction is Ca(2+)-dependent; the interaction is direct. Post-translationally, phosphorylated on Ser and Tyr residues after cellular activation. In endothelial cells Fyn mediates mechanical-force (stretch or pull) induced tyrosine phosphorylation. Phosphorylated on tyrosine residues by FER and FES in response to FCER1 activation. Palmitoylation by ZDHHC21 is necessary for cell surface expression in endothelial cells and enrichment in membrane rafts.

The protein resides in the cell membrane. It localises to the membrane raft. Its subcellular location is the cell junction. In terms of biological role, cell adhesion molecule which is required for leukocyte transendothelial migration (TEM) under most inflammatory conditions. Tyr-660 plays a critical role in TEM and is required for efficient trafficking of PECAM1 to and from the lateral border recycling compartment (LBRC) and is also essential for the LBRC membrane to be targeted around migrating leukocytes. Trans-homophilic interaction may play a role in endothelial cell-cell adhesion via cell junctions. Heterophilic interaction with CD177 plays a role in transendothelial migration of neutrophils. Homophilic ligation of PECAM1 prevents macrophage-mediated phagocytosis of neighboring viable leukocytes by transmitting a detachment signal. Promotes macrophage-mediated phagocytosis of apoptotic leukocytes by tethering them to the phagocytic cells; PECAM1-mediated detachment signal appears to be disabled in apoptotic leukocytes. Modulates bradykinin receptor BDKRB2 activation. Regulates bradykinin- and hyperosmotic shock-induced ERK1/2 activation in endothelial cells. Induces susceptibility to atherosclerosis. In Rattus norvegicus (Rat), this protein is Platelet endothelial cell adhesion molecule (Pecam1).